Consider the following 255-residue polypeptide: Small ribosomal subunit protein eS4 (255 aa).

The S4 RNA-binding domain occupies 43–115 (IPLLILVRDV…PTRFFTLHPI (73 aa)).

It belongs to the eukaryotic ribosomal protein eS4 family.

This is Small ribosomal subunit protein eS4 from Hyperthermus butylicus (strain DSM 5456 / JCM 9403 / PLM1-5).